Reading from the N-terminus, the 1036-residue chain is Putative GPI-anchored protein pfl2 (1036 aa).

A signal peptide spans 1-23 (MKFFTASTLFLLAAQSLNSGVSA). N-linked (GlcNAc...) asparagine glycans are attached at residues Asn66, Asn97, Asn165, Asn201, Asn233, Asn259, Asn277, Asn296, Asn312, Asn331, Asn347, Asn363, Asn379, Asn395, Asn410, Asn429, Asn445, Asn461, Asn477, Asn493, Asn509, Asn524, Asn543, Asn559, and Asn573. Disordered regions lie at residues 88-130 (SSSL…SSLA) and 147-183 (SSLA…SLSS). Over residues 243–585 (SSISSTVSSS…ITSSASGSTG (343 aa)) the composition is skewed to low complexity. The disordered stretch occupies residues 243–710 (SSISSTVSSS…PLSNSTVAPT (468 aa)). Over residues 586–595 (EFTNTNSGNG) the composition is skewed to polar residues. A compositionally biased stretch (low complexity) spans 597-630 (VSGSVTTPTSTPLSNSTVAPTSTFTSSGFNTTSG). Asn611, Asn626, Asn642, Asn657, Asn673, Asn688, Asn704, Asn719, and Asn735 each carry an N-linked (GlcNAc...) asparagine glycan. Over residues 631-647 (LPTSSASTPLSNSTVAP) the composition is skewed to polar residues. Residues 648–692 (TSTFTSSGFNTTSGLPTSSASTPSSNSSIVPTSTFTSSGFNTTSG) show a composition bias toward low complexity. The span at 693 to 709 (LPTSSASTPLSNSTVAP) shows a compositional bias: polar residues. 3 stretches are compositionally biased toward low complexity: residues 722 to 831 (SGLP…TTAS), 838 to 862 (PTAA…ATYT), and 885 to 906 (IPVN…SFTP). Disordered regions lie at residues 722–862 (SGLP…ATYT) and 885–918 (IPVN…SYSN). 7 N-linked (GlcNAc...) asparagine glycosylation sites follow: Asn918, Asn924, Asn930, Asn933, Asn939, Asn947, and Asn977. The tract at residues 978–1011 (TTATSGSDDDVKTASTSSSTSYTSSSSSSSSTTS) is disordered. Positions 990 to 1011 (TASTSSSTSYTSSSSSSSSTTS) are enriched in low complexity. Ser1011 is lipidated: GPI-anchor amidated serine. The propeptide at 1012-1036 (AASSKASVSMGLNGLMIAAVILLVA) is removed in mature form.

It localises to the cell membrane. Functionally, may be involved in agglutination during conjugation or other aspects of colony formation. Induces flocculation when overexpressed. This Schizosaccharomyces pombe (strain 972 / ATCC 24843) (Fission yeast) protein is Putative GPI-anchored protein pfl2.